The primary structure comprises 170 residues: ATP synthase subunit b (170 aa).

A helical transmembrane segment spans residues 25-45; sequence LIPNGTFFAVLIIFLIVLGVI. Positions 121 to 147 are disordered; sequence EVAQTLTQADQQLSAQGDQVRSGLESS. Polar residues predominate over residues 122–139; the sequence is VAQTLTQADQQLSAQGDQ.

This sequence belongs to the ATPase B chain family. In terms of assembly, F-type ATPases have 2 components, F(1) - the catalytic core - and F(0) - the membrane proton channel. F(1) has five subunits: alpha(3), beta(3), gamma(1), delta(1), epsilon(1). F(0) has three main subunits: a(1), b(2) and c(10-14). The alpha and beta chains form an alternating ring which encloses part of the gamma chain. F(1) is attached to F(0) by a central stalk formed by the gamma and epsilon chains, while a peripheral stalk is formed by the delta and b chains.

The protein resides in the cell membrane. Its function is as follows. F(1)F(0) ATP synthase produces ATP from ADP in the presence of a proton or sodium gradient. F-type ATPases consist of two structural domains, F(1) containing the extramembraneous catalytic core and F(0) containing the membrane proton channel, linked together by a central stalk and a peripheral stalk. During catalysis, ATP synthesis in the catalytic domain of F(1) is coupled via a rotary mechanism of the central stalk subunits to proton translocation. Functionally, component of the F(0) channel, it forms part of the peripheral stalk, linking F(1) to F(0). The protein is ATP synthase subunit b of Mycolicibacterium smegmatis (strain ATCC 700084 / mc(2)155) (Mycobacterium smegmatis).